The chain runs to 89 residues: Small ribosomal subunit protein uS15 (89 aa).

Belongs to the universal ribosomal protein uS15 family. In terms of assembly, part of the 30S ribosomal subunit. Forms a bridge to the 50S subunit in the 70S ribosome, contacting the 23S rRNA.

One of the primary rRNA binding proteins, it binds directly to 16S rRNA where it helps nucleate assembly of the platform of the 30S subunit by binding and bridging several RNA helices of the 16S rRNA. Its function is as follows. Forms an intersubunit bridge (bridge B4) with the 23S rRNA of the 50S subunit in the ribosome. The sequence is that of Small ribosomal subunit protein uS15 from Maridesulfovibrio salexigens (strain ATCC 14822 / DSM 2638 / NCIMB 8403 / VKM B-1763) (Desulfovibrio salexigens).